The following is a 1612-amino-acid chain: Replicase large subunit (1612 aa).

The tract at residues 50 to 452 (FSKVISQEQI…DKSVLQALSM (403 aa)) is methyltransferase. Positions 72-280 (TFYNTQLAVH…HSYKNVIKYV (209 aa)) constitute an Alphavirus-like MT domain. The (+)RNA virus helicase ATP-binding domain occupies 794–953 (LIYSDMGKLQ…TLVYDHREVR (160 aa)). The helicase stretch occupies residues 822 to 1080 (TLVDGVPGCG…TRHTKSFKYY (259 aa)). 826–833 (GVPGCGKT) serves as a coordination point for ATP. The (+)RNA virus helicase C-terminal domain maps to 954-1112 (RLSLRCPADV…DMYKVDAGIL (159 aa)). Residues 1374 to 1487 (MEVLELDISK…YIPKGLDLPD (114 aa)) form the RdRp catalytic domain.

This sequence belongs to the ssRNA positive-strand viruses RNA-directed RNA polymerase family. Heterodimer of a large and a small subunit.

The enzyme catalyses RNA(n) + a ribonucleoside 5'-triphosphate = RNA(n+1) + diphosphate. It catalyses the reaction ATP + H2O = ADP + phosphate + H(+). Functionally, is an RNA-dependent RNA polymerase active in viral RNA replication. Its function is as follows. Is a methyltransferase active in RNA capping and an RNA helicase. Methyltransferase displays a cytoplasmic capping enzyme activity. This function is necessary since all viral RNAs are synthesized in the cytoplasm, and host capping enzymes are restricted to the nucleus. Helicase region probably exhibits NTPase and RNA unwinding activities (Potential). It also acts as a suppressor of RNA-mediated gene silencing, also known as post-transcriptional gene silencing (PTGS), a mechanism of plant viral defense that limits the accumulation of viral RNAs. May mediate silencing suppression through either inhibition of HEN1-mediated siRNA or siRNA demethylation. This is Replicase large subunit from Cymbidium (ORSV-Cy).